The following is an 845-amino-acid chain: Putative DEAD-box ATP-dependent RNA helicase 29 (845 aa).

The short motif at 28–56 (GGFESLNLGPNVFNAIKKKGYKVPTPIQR) is the Q motif element. A Helicase ATP-binding domain is found at 59–232 (MPLILSGVDV…KAGLREPQLV (174 aa)). 72–79 (ARTGSGKT) is a binding site for ATP. The DEAD box motif lies at 180–183 (DEAD). The 156-residue stretch at 256–411 (KYSALLYLVR…EVLKNMEEVM (156 aa)) folds into the Helicase C-terminal domain. Residues 675–845 (SGKIKTESGA…GGGGKRGRGR (171 aa)) are disordered. Basic and acidic residues-rich tracts occupy residues 696-716 (RWQE…DETT) and 738-754 (VRSE…ERQQ). Residues 770–799 (GGRGGARGGRGGGARGGRGGSRDFGGGGRD) show a composition bias toward gly residues. Residues 806-817 (RGGRSGGRDFGG) show a composition bias toward basic and acidic residues. The span at 828–845 (GGKRGGGRGGGGKRGRGR) shows a compositional bias: basic residues.

It belongs to the DEAD box helicase family. DDX54/DBP10 subfamily.

It catalyses the reaction ATP + H2O = ADP + phosphate + H(+). The protein is Putative DEAD-box ATP-dependent RNA helicase 29 (RH29) of Arabidopsis thaliana (Mouse-ear cress).